A 345-amino-acid chain; its full sequence is S-adenosylmethionine:tRNA ribosyltransferase-isomerase (345 aa).

The protein belongs to the QueA family. As to quaternary structure, monomer.

It localises to the cytoplasm. It catalyses the reaction 7-aminomethyl-7-carbaguanosine(34) in tRNA + S-adenosyl-L-methionine = epoxyqueuosine(34) in tRNA + adenine + L-methionine + 2 H(+). It functions in the pathway tRNA modification; tRNA-queuosine biosynthesis. Its function is as follows. Transfers and isomerizes the ribose moiety from AdoMet to the 7-aminomethyl group of 7-deazaguanine (preQ1-tRNA) to give epoxyqueuosine (oQ-tRNA). The polypeptide is S-adenosylmethionine:tRNA ribosyltransferase-isomerase (Shewanella putrefaciens (strain CN-32 / ATCC BAA-453)).